Here is a 363-residue protein sequence, read N- to C-terminus: Cell division cycle-associated protein 3 (363 aa).

Positions 1–12 (MGSAESKAQVTP) are enriched in polar residues. Disordered regions lie at residues 1-81 (MGSA…TPLR), 126-152 (VESQTAPPAGEHVNDHEVEPSVEKAET), 191-210 (MNDQEESPIAETMNDQEESP), and 231-363 (ENLN…HSNS). An F-box-like region spans residues 93-152 (KQLSEVFVAEDSSTEGGPLGFTGPEATNLERQVVESQTAPPAGEHVNDHEVEPSVEKAET). Over residues 137–152 (HVNDHEVEPSVEKAET) the composition is skewed to basic and acidic residues. Residues 192–210 (NDQEESPIAETMNDQEESP) show a composition bias toward acidic residues. Positions 259-285 (SVVSTESTQATGQQQKTRGKSPRSSGV) are enriched in polar residues. Residues 296 to 308 (LLSSSSGRSPLRI) show a composition bias toward low complexity. Polar residues predominate over residues 311–321 (EDNSPNTNTQH). Positions 353-355 (KEN) match the KEN box motif.

Interacts with wee1, when wee1 is phosphorylated at 'Ser-38'. In terms of processing, phosphorylated. Post-translationally, ubiquitinated and degraded by the APC/C-Cdh1 complex during G1 phase.

The protein localises to the cytoplasm. The protein resides in the cytosol. It participates in protein modification; protein ubiquitination. In terms of biological role, F-box-like protein which is required for entry into mitosis. Acts by participating in E3 ligase complexes that mediate the ubiquitination and degradation of WEE1 kinase at G2/M phase. The protein is Cell division cycle-associated protein 3 (cdca3) of Xenopus laevis (African clawed frog).